The chain runs to 133 residues: Large ribosomal subunit protein uL14m (133 aa).

The protein belongs to the universal ribosomal protein uL14 family. In terms of assembly, probably part of the large ribosomal subunit.

The protein resides in the hydrogenosome. The polypeptide is Large ribosomal subunit protein uL14m (rpl14) (Nyctotherus ovalis).